A 565-amino-acid polypeptide reads, in one-letter code: MKSPAPSRPQKMALIPACIFLCFAALSVQAEETPVTPQPPDILLGPLFNDVQNAKLFPDQKTFADAVPNSDPLMILADYRMQQNQSGFDLRHFVNVNFTLPKEGEKYVPPEGQSLREHIDGLWPVLTRSTENTEKWDSLLPLPEPYVVPGGRFREVYYWDSYFTMLGLAESGHWDKVADMVANFAHEIDTYGHIPNGNRSYYLSRSQPPFFALMVELLAQHEGDAALKQYLPQMQKEYAYWMDGVENLQAGQQEKRVVKLQDGTLLNRYWDDRDTPRPESWVEDIATAKSNPNRPATEIYRDLRSAAASGWDFSSRWMDNQHQLNTLRTTSIVPVDLNSLMFKMEKILARASKAAGDNAMANQYETLANARQKGIEKYMWNDQQGWYADYDLKSHKVRNQLTAAALFPLYVNAAAKDRANKMATATKTHLLQPGGLNTTSVKSGQQWDAPNGWAPLQWVATEGLQNYGQKEVAMDISWHFLTNVQHTYDREKKLVEKYDVSTTGTGGGGGEYPLQDGFGWTNGVTLKMLDLICPKEQPCDNVPATRPTVKSATTQPSTKEAQPTP.

The signal sequence occupies residues 1–30 (MKSPAPSRPQKMALIPACIFLCFAALSVQA). Residues arginine 152, 159 to 160 (WD), asparagine 196, 205 to 207 (RSQ), 277 to 279 (RPE), and glycine 310 each bind substrate. Catalysis depends on proton donor/acceptor residues aspartate 312 and glutamate 496. Glutamate 511 is a substrate binding site. The tract at residues 538–565 (PCDNVPATRPTVKSATTQPSTKEAQPTP) is disordered. The segment covering 548–565 (TVKSATTQPSTKEAQPTP) has biased composition (polar residues).

This sequence belongs to the glycosyl hydrolase 37 family. Monomer.

It localises to the periplasm. The catalysed reaction is alpha,alpha-trehalose + H2O = alpha-D-glucose + beta-D-glucose. In terms of biological role, provides the cells with the ability to utilize trehalose at high osmolarity by splitting it into glucose molecules that can subsequently be taken up by the phosphotransferase-mediated uptake system. This is Periplasmic trehalase from Escherichia coli O8 (strain IAI1).